The sequence spans 105 residues: Antitoxin YfjZ (105 aa).

This sequence belongs to the CbeA/YafW/YfjZ antitoxin family.

Functionally, antitoxin component of a type IV toxin-antitoxin (TA) system. Antitoxin that counteracts the effect of cognate toxin YpjF. Also counteracts the effect of non-cognate toxins CbtA and YfkI. This is Antitoxin YfjZ (yfjZ) from Escherichia coli (strain K12).